The sequence spans 122 residues: Probable F-box protein At4g23960 (122 aa).

Residues M1–L45 form the F-box domain.

The sequence is that of Probable F-box protein At4g23960 from Arabidopsis thaliana (Mouse-ear cress).